Consider the following 426-residue polypeptide: Na(+)/H(+) antiporter 1 (426 aa).

12 consecutive transmembrane segments (helical) span residues 1-21, 29-49, 57-77, 95-115, 120-140, 158-178, 184-204, 208-228, 236-256, 286-306, 309-329, and 382-402; these read MELM…SLVA, IPDI…LQII, IFEY…AFTM, ITFL…LNLP, VGYL…IPVF, IFND…FGLF, LIDL…LAKI, IIIH…GAML, LLPS…IMGL, VFIF…NYFI, LLVA…LGLI, and IAGT…ILEA.

The protein belongs to the monovalent cation:proton antiporter 1 (CPA1) transporter (TC 2.A.36) family.

Its subcellular location is the cell membrane. This is a Na(+)/H(+) antiporter. Can also transport lithium. In Methanocaldococcus jannaschii (strain ATCC 43067 / DSM 2661 / JAL-1 / JCM 10045 / NBRC 100440) (Methanococcus jannaschii), this protein is Na(+)/H(+) antiporter 1.